The chain runs to 140 residues: Small ribosomal subunit protein uS12 (140 aa).

The disordered stretch occupies residues 33-55 (KEQTNVSSPQKRGVCTRVGTMTP).

It belongs to the universal ribosomal protein uS12 family. As to quaternary structure, part of the 30S ribosomal subunit. Contacts proteins S8 and S17. May interact with IF1 in the 30S initiation complex.

In terms of biological role, with S4 and S5 plays an important role in translational accuracy. Functionally, interacts with and stabilizes bases of the 16S rRNA that are involved in tRNA selection in the A site and with the mRNA backbone. Located at the interface of the 30S and 50S subunits, it traverses the body of the 30S subunit contacting proteins on the other side and probably holding the rRNA structure together. The combined cluster of proteins S8, S12 and S17 appears to hold together the shoulder and platform of the 30S subunit. The chain is Small ribosomal subunit protein uS12 from Geobacillus kaustophilus (strain HTA426).